Reading from the N-terminus, the 132-residue chain is Amicyanin (132 aa).

The first 26 residues, 1–26 (MISAKTLRPAIAAIALFAIGATGAWA), serve as a signal peptide directing secretion. Glutamine 27 carries the post-translational modification Pyrrolidone carboxylic acid. Residues 27–132 (QDKITVTSEK…PFMRGKVIVE (106 aa)) enclose the Plastocyanin-like domain. Residues histidine 80, cysteine 119, histidine 122, and methionine 125 each coordinate Cu cation.

Cu cation serves as cofactor.

It is found in the periplasm. It functions in the pathway one-carbon metabolism; methylamine degradation. Its function is as follows. Primary acceptor of electrons from methylamine dehydrogenase. Passes those electrons on either a soluble cytochrome c or to pseudoazurin. This chain is Amicyanin (mauC), found in Paracoccus versutus (Thiobacillus versutus).